A 365-amino-acid polypeptide reads, in one-letter code: Probable cinnamyl alcohol dehydrogenase (365 aa).

Cys47 serves as a coordination point for Zn(2+). Thr49 provides a ligand contact to NADP(+). Residues His69, Glu70, Cys100, Cys103, Cys106, Cys114, and Cys163 each contribute to the Zn(2+) site. NADP(+) is bound by residues Thr167, Gly188 to Gly193, Ser211 to Lys216, Thr251, Gly275, and Ser298 to Ile300.

This sequence belongs to the zinc-containing alcohol dehydrogenase family. In terms of assembly, homodimer. Requires Zn(2+) as cofactor.

The enzyme catalyses (E)-cinnamyl alcohol + NADP(+) = (E)-cinnamaldehyde + NADPH + H(+). It catalyses the reaction (E)-coniferol + NADP(+) = (E)-coniferaldehyde + NADPH + H(+). It carries out the reaction (E)-sinapyl alcohol + NADP(+) = (E)-sinapaldehyde + NADPH + H(+). The catalysed reaction is (E)-4-coumaroyl alcohol + NADP(+) = (E)-4-coumaraldehyde + NADPH + H(+). The enzyme catalyses (E)-caffeyl alcohol + NADP(+) = (E)-caffeyl aldehyde + NADPH + H(+). It participates in aromatic compound metabolism; phenylpropanoid biosynthesis. In terms of biological role, involved in lignin biosynthesis. Catalyzes the final step specific for the production of lignin monomers. Catalyzes the NADPH-dependent reduction of coniferaldehyde, 5-hydroxyconiferaldehyde, sinapaldehyde, 4-coumaraldehyde and caffeyl aldehyde to their respective alcohols. The polypeptide is Probable cinnamyl alcohol dehydrogenase (CAD) (Saccharum officinarum (Sugarcane)).